The following is a 360-amino-acid chain: Aminomethyltransferase (360 aa).

It belongs to the GcvT family. In terms of assembly, the glycine cleavage system is composed of four proteins: P, T, L and H.

It catalyses the reaction N(6)-[(R)-S(8)-aminomethyldihydrolipoyl]-L-lysyl-[protein] + (6S)-5,6,7,8-tetrahydrofolate = N(6)-[(R)-dihydrolipoyl]-L-lysyl-[protein] + (6R)-5,10-methylene-5,6,7,8-tetrahydrofolate + NH4(+). Functionally, the glycine cleavage system catalyzes the degradation of glycine. The polypeptide is Aminomethyltransferase (Pseudomonas aeruginosa (strain ATCC 15692 / DSM 22644 / CIP 104116 / JCM 14847 / LMG 12228 / 1C / PRS 101 / PAO1)).